The primary structure comprises 302 residues: 4-hydroxy-tetrahydrodipicolinate synthase (302 aa).

Residue T55 coordinates pyruvate. Y144 (proton donor/acceptor) is an active-site residue. The active-site Schiff-base intermediate with substrate is K172. V214 contacts pyruvate.

Belongs to the DapA family. In terms of assembly, homotetramer; dimer of dimers.

The protein resides in the cytoplasm. It catalyses the reaction L-aspartate 4-semialdehyde + pyruvate = (2S,4S)-4-hydroxy-2,3,4,5-tetrahydrodipicolinate + H2O + H(+). It participates in amino-acid biosynthesis; L-lysine biosynthesis via DAP pathway; (S)-tetrahydrodipicolinate from L-aspartate: step 3/4. Catalyzes the condensation of (S)-aspartate-beta-semialdehyde [(S)-ASA] and pyruvate to 4-hydroxy-tetrahydrodipicolinate (HTPA). This is 4-hydroxy-tetrahydrodipicolinate synthase from Synechococcus sp. (strain CC9902).